The sequence spans 400 residues: MGFITKAIPLALAAASVINGAEILETRAGVQTLADKYIVVMNDGMTDKDFDSHRSWVNRTHRRRLVRRGAKAMTGMKHTYRFPTGMKGYSGHFDEQMINEIAKRADVKYIERDARVQINAIEMQDNVPSWGLARVGSKEPGGTTYYYDSSAGQGVTAYVIDTGTDIKHEEFSGRATWGGNFVDDIDMDCNGHGTHVSGTVAGTKFGVAKKANVVGVKVLDCDGSGSNSGVIMGMEFATNDAKKKGAGKAVANMSLGGAFSQASNDAAAAIAQGGVFLAVAAGNDNVDAAMASPASEPSICTVAASTEQDGKASFSNYGQVVDVYAPGDGITSAKPGGGSQVLSGTSMASPHVAGLAAYLIGTGKSGGPQLCDTIKNMAIDVITNPGAGTTGKLINNGSGK.

A signal peptide spans M1 to G20. Residues A21–N119 constitute a propeptide that is removed on maturation. The 83-residue stretch at K36–I118 folds into the Inhibitor I9 domain. The Peptidase S8 domain maps to S129–K400. Active-site charge relay system residues include D161 and H192. N252 carries an N-linked (GlcNAc...) asparagine glycan. The active-site Charge relay system is S346. N396 carries an N-linked (GlcNAc...) asparagine glycan.

The protein belongs to the peptidase S8 family.

The protein localises to the secreted. Functionally, secreted subtilisin-like serine protease with keratinolytic activity that contributes to pathogenicity. The protein is Subtilisin-like protease 7 (SUB7) of Arthroderma gypseum (strain ATCC MYA-4604 / CBS 118893) (Microsporum gypseum).